We begin with the raw amino-acid sequence, 316 residues long: Acetyl-coenzyme A carboxylase carboxyl transferase subunit alpha (316 aa).

The region spanning 39 to 293 is the CoA carboxyltransferase C-terminal domain; the sequence is KLEEKNAQLT…KKHLQANLTN (255 aa).

Belongs to the AccA family. Acetyl-CoA carboxylase is a heterohexamer composed of biotin carboxyl carrier protein (AccB), biotin carboxylase (AccC) and two subunits each of ACCase subunit alpha (AccA) and ACCase subunit beta (AccD).

The protein localises to the cytoplasm. The enzyme catalyses N(6)-carboxybiotinyl-L-lysyl-[protein] + acetyl-CoA = N(6)-biotinyl-L-lysyl-[protein] + malonyl-CoA. It functions in the pathway lipid metabolism; malonyl-CoA biosynthesis; malonyl-CoA from acetyl-CoA: step 1/1. In terms of biological role, component of the acetyl coenzyme A carboxylase (ACC) complex. First, biotin carboxylase catalyzes the carboxylation of biotin on its carrier protein (BCCP) and then the CO(2) group is transferred by the carboxyltransferase to acetyl-CoA to form malonyl-CoA. The polypeptide is Acetyl-coenzyme A carboxylase carboxyl transferase subunit alpha (Coxiella burnetii (strain RSA 331 / Henzerling II)).